We begin with the raw amino-acid sequence, 678 residues long: Pescadillo homolog (678 aa).

The tract at residues 265 to 289 (PQQQTKTNNTTKKSKSTTAAAAATT) is disordered. Residues 269–289 (TKTNNTTKKSKSTTAAAAATT) show a composition bias toward low complexity. The region spanning 352–442 (DVTTLFKGFH…LLLPYSEYTI (91 aa)) is the BRCT domain. Disordered regions lie at residues 485 to 601 (TNAE…EDTK) and 626 to 678 (ATAN…KQKK). Over residues 505–518 (SDGESDDEDDEDLE) the composition is skewed to acidic residues. Residues 519–531 (HLETRYTEELRKE) show a composition bias toward basic and acidic residues. A compositionally biased stretch (acidic residues) spans 541-574 (VDDDDEEEEDGEEDGEEEEEEEDGEEESESESES). Positions 581–640 (VLTKKQRDELNKQKQAEEDTKLAELMIRKKDKWIYNKVKETNQQRATANQTLLEKRNKVE) form a coiled coil. Composition is skewed to basic and acidic residues over residues 585–601 (KQRD…EDTK) and 633–643 (LEKRNKVESGK). Over residues 649-678 (VKVAPQPKKPAPLVKKSQQKQQQASKKQKK) the composition is skewed to low complexity.

The protein belongs to the pescadillo family.

The protein resides in the nucleus. Its subcellular location is the nucleolus. The protein localises to the nucleoplasm. Its function is as follows. Required for maturation of ribosomal RNAs and formation of the large ribosomal subunit. This is Pescadillo homolog from Dictyostelium discoideum (Social amoeba).